We begin with the raw amino-acid sequence, 584 residues long: 65 kDa protein (584 aa).

A Toprim domain is found at 459–548; it reads YDLYIAESAI…TKKVENWLPP (90 aa).

The chain is 65 kDa protein from Zymomonas mobilis subsp. mobilis (strain ATCC 10988 / DSM 424 / LMG 404 / NCIMB 8938 / NRRL B-806 / ZM1).